The chain runs to 674 residues: UvrABC system protein B (674 aa).

Residues 26–414 (EGLDSGLAHQ…SGNDIAEQVV (389 aa)) form the Helicase ATP-binding domain. ATP is bound at residue 39 to 46 (GVTGSGKT). Positions 92 to 115 (YYDYYQPEAYVPTTDTFIEKDASV) match the Beta-hairpin motif. The Helicase C-terminal domain maps to 432-586 (QVDDLLSEIR…ALHNKKNGIT (155 aa)). In terms of domain architecture, UVR spans 634-669 (ELEIQRLETEMYDLAQNLEFEKAAEARDKIHTLRQQ).

It belongs to the UvrB family. In terms of assembly, forms a heterotetramer with UvrA during the search for lesions. Interacts with UvrC in an incision complex.

It is found in the cytoplasm. Its function is as follows. The UvrABC repair system catalyzes the recognition and processing of DNA lesions. A damage recognition complex composed of 2 UvrA and 2 UvrB subunits scans DNA for abnormalities. Upon binding of the UvrA(2)B(2) complex to a putative damaged site, the DNA wraps around one UvrB monomer. DNA wrap is dependent on ATP binding by UvrB and probably causes local melting of the DNA helix, facilitating insertion of UvrB beta-hairpin between the DNA strands. Then UvrB probes one DNA strand for the presence of a lesion. If a lesion is found the UvrA subunits dissociate and the UvrB-DNA preincision complex is formed. This complex is subsequently bound by UvrC and the second UvrB is released. If no lesion is found, the DNA wraps around the other UvrB subunit that will check the other stand for damage. This is UvrABC system protein B from Photobacterium profundum (strain SS9).